Reading from the N-terminus, the 350-residue chain is Ferredoxin--NADP reductase (350 aa).

FAD-binding residues include Asp49, Gln57, Tyr62, Val102, Phe136, Asp303, and Thr344.

This sequence belongs to the ferredoxin--NADP reductase type 2 family. As to quaternary structure, homodimer. The cofactor is FAD.

It carries out the reaction 2 reduced [2Fe-2S]-[ferredoxin] + NADP(+) + H(+) = 2 oxidized [2Fe-2S]-[ferredoxin] + NADPH. The protein is Ferredoxin--NADP reductase of Granulibacter bethesdensis (strain ATCC BAA-1260 / CGDNIH1).